The sequence spans 368 residues: Transcription factor TGA7 (368 aa).

The segment covering 70 to 82 has biased composition (polar residues); that stretch reads HNQIEAEQPSSND. A disordered region spans residues 70–89; the sequence is HNQIEAEQPSSNDNQDDDGR. The bZIP domain maps to 91 to 151; sequence HDKMKRRLAQ…LGPSGSINTG (61 aa). Coiled coils occupy residues 92-142 and 252-285; these read DKMK…QGHL and DQQI…SLAE. The interval 93–113 is basic motif; it reads KMKRRLAQNREAARKSRLRKK. Residues 119–133 form a leucine-zipper region; that stretch reads LEESRLKLSQLEQEL. The 212-residue stretch at 152–363 folds into the DOG1 domain; that stretch reads IASFEMEYSH…RALSSLWAAR (212 aa).

Belongs to the bZIP family. As to quaternary structure, binds DNA as a dimer. Interacts with NPR1 and NPR4. Interacts with GRXC7/ROXY1.

It is found in the nucleus. In terms of biological role, transcriptional activator that binds specifically to the DNA sequence 5'-TGACG-3'. Recognizes ocs elements like the as-1 motif of the cauliflower mosaic virus 35S promoter. Binding to the as-1-like cis elements mediate auxin- and salicylic acid-inducible transcription. May be involved in the induction of the systemic acquired resistance (SAR) via its interaction with NPR1. The chain is Transcription factor TGA7 (TGA7) from Arabidopsis thaliana (Mouse-ear cress).